The sequence spans 492 residues: Probable cytosol aminopeptidase (492 aa).

Mn(2+)-binding residues include Lys-262 and Asp-267. Lys-274 is a catalytic residue. Mn(2+) contacts are provided by Asp-286, Asp-345, and Glu-347. Arg-349 is a catalytic residue.

The protein belongs to the peptidase M17 family. It depends on Mn(2+) as a cofactor.

It localises to the cytoplasm. It carries out the reaction Release of an N-terminal amino acid, Xaa-|-Yaa-, in which Xaa is preferably Leu, but may be other amino acids including Pro although not Arg or Lys, and Yaa may be Pro. Amino acid amides and methyl esters are also readily hydrolyzed, but rates on arylamides are exceedingly low.. It catalyses the reaction Release of an N-terminal amino acid, preferentially leucine, but not glutamic or aspartic acids.. Its function is as follows. Presumably involved in the processing and regular turnover of intracellular proteins. Catalyzes the removal of unsubstituted N-terminal amino acids from various peptides. This Acaryochloris marina (strain MBIC 11017) protein is Probable cytosol aminopeptidase.